Consider the following 176-residue polypeptide: NADH-quinone oxidoreductase subunit 10 (176 aa).

Transmembrane regions (helical) follow at residues 2–22 (SLLEGLALFLLLLSGVLVVTL), 26–46 (IHAALALILNFLVLAGVYVAL), 56–76 (VIVYAGAIVVLFLFVIMLLFA), 91–111 (PLAALLALGVAGILAAGLWGL), and 137–157 (FVLLAVGFLLMAATVVAVALV).

The protein belongs to the complex I subunit 6 family. In terms of assembly, NDH-1 is composed of 15 different subunits, Nqo1 to Nqo15. The complex has a L-shaped structure, with the hydrophobic arm (subunits Nqo7, Nqo8 and Nqo10 to Nqo14) embedded in the membrane and the hydrophilic peripheral arm (subunits Nqo1 to Nqo6, Nqo9 and Nqo15) protruding into the bacterial cytoplasm. The hydrophilic domain contains all the redox centers.

Its subcellular location is the cell inner membrane. The enzyme catalyses a quinone + NADH + 5 H(+)(in) = a quinol + NAD(+) + 4 H(+)(out). In terms of biological role, NDH-1 shuttles electrons from NADH, via FMN and iron-sulfur (Fe-S) centers, to quinones in the respiratory chain. The immediate electron acceptor for the enzyme in this species is menaquinone. Couples the redox reaction to proton translocation (for every two electrons transferred, four hydrogen ions are translocated across the cytoplasmic membrane), and thus conserves the redox energy in a proton gradient required for the synthesis of ATP. This is NADH-quinone oxidoreductase subunit 10 (nqo10) from Thermus thermophilus (strain ATCC 27634 / DSM 579 / HB8).